The primary structure comprises 375 residues: MQRLQICVYIYLFVLIVAGPVDLSENSEQKENVEKEGLCNACMWRQNTKSSRIEAIKIQILSKLRLETAPNISRDAVRQLLPRAPPLRELIDQYDVQRDDSSDGSLEDDDYHATTETVIAMPAETDLLMQVEGKPKCCFFKFSSKIQYNKVVKAQLWIYLRPVKTPTTVFVQILRLIKPMKDGTRYTGIRSLKLDMNPGTGIWQSIDVKTVLQNWLKQPESNLGIEIKALDENGHDLAVTFPGPGEDGLNPFLEVKVTDTPKRSRRDFGLDCDEHSTESRCCRYPLTVDFEAFGWDWIIAPKRYKANYCSGECEFVFLQKYPHTHLVHQANPRGSAGPCCTPTKMSPINMLYFNGKEQIIYGKIPAMVVDRCGCS.

Residues 1 to 18 (MQRLQICVYIYLFVLIVA) form the signal peptide. A propeptide spanning residues 19–266 (GPVDLSENSE…VTDTPKRSRR (248 aa)) is cleaved from the precursor. N-linked (GlcNAc...) asparagine glycosylation is present at N71. 4 disulfide bridges follow: C272/C282, C281/C340, C309/C372, and C313/C374.

This sequence belongs to the TGF-beta family. In terms of assembly, homodimer; disulfide-linked. Interacts with WFIKKN2, leading to inhibit its activity. Interacts with FSTL3. In terms of processing, synthesized as large precursor molecule that undergoes proteolytic cleavage to generate an N-terminal propeptide and a disulfide linked C-terminal dimer, which is the biologically active molecule. The circulating form consists of a latent complex of the C-terminal dimer and other proteins, including its propeptide, which maintain the C-terminal dimer in a latent, inactive state. Ligand activation requires additional cleavage of the prodomain by a tolloid-like metalloproteinase.

Its subcellular location is the secreted. Functionally, acts specifically as a negative regulator of skeletal muscle growth. This chain is Growth/differentiation factor 8 (MSTN), found in Canis lupus familiaris (Dog).